Reading from the N-terminus, the 437-residue chain is Methylenetetrahydrofolate--tRNA-(uracil-5-)-methyltransferase TrmFO (437 aa).

8–13 (GAGLAG) is an FAD binding site.

Belongs to the MnmG family. TrmFO subfamily. The cofactor is FAD.

Its subcellular location is the cytoplasm. The catalysed reaction is uridine(54) in tRNA + (6R)-5,10-methylene-5,6,7,8-tetrahydrofolate + NADH + H(+) = 5-methyluridine(54) in tRNA + (6S)-5,6,7,8-tetrahydrofolate + NAD(+). The enzyme catalyses uridine(54) in tRNA + (6R)-5,10-methylene-5,6,7,8-tetrahydrofolate + NADPH + H(+) = 5-methyluridine(54) in tRNA + (6S)-5,6,7,8-tetrahydrofolate + NADP(+). Catalyzes the folate-dependent formation of 5-methyl-uridine at position 54 (M-5-U54) in all tRNAs. This Desulfitobacterium hafniense (strain Y51) protein is Methylenetetrahydrofolate--tRNA-(uracil-5-)-methyltransferase TrmFO.